A 378-amino-acid polypeptide reads, in one-letter code: UPF0754 membrane protein Bcer98_0694 (378 aa).

The chain crosses the membrane as a helical span at residues 358–378 (LGALLGGTIGLMQGILLLFLM).

This sequence belongs to the UPF0754 family.

It is found in the cell membrane. In Bacillus cytotoxicus (strain DSM 22905 / CIP 110041 / 391-98 / NVH 391-98), this protein is UPF0754 membrane protein Bcer98_0694.